Reading from the N-terminus, the 326-residue chain is Cinnamoyl-CoA reductase CAD2 (326 aa).

NADP(+)-binding positions include 14–20, Arg-39, Lys-46, 66–67, and 86–88; these read GASGYIA, NL, and TAS. (E)-coniferaldehyde contacts are provided by Ser-130, Tyr-136, Arg-141, and Tyr-165. NADP(+) is bound by residues Tyr-165, Lys-169, 192-195, and Ser-207; that span reads PAMV. The Proton donor role is filled by Lys-169. Met-194, Ser-207, Phe-226, Val-257, and Tyr-290 together coordinate (E)-coniferaldehyde.

Belongs to the NAD(P)-dependent epimerase/dehydratase family. Dihydroflavonol-4-reductase subfamily.

The protein resides in the cytoplasm. It catalyses the reaction (E)-cinnamaldehyde + NADP(+) + CoA = (E)-cinnamoyl-CoA + NADPH + H(+). It carries out the reaction (E)-coniferaldehyde + NADP(+) + CoA = (E)-feruloyl-CoA + NADPH + H(+). The enzyme catalyses (E)-4-coumaraldehyde + NADP(+) + CoA = (E)-4-coumaroyl-CoA + NADPH + H(+). The protein operates within aromatic compound metabolism; phenylpropanoid biosynthesis. Its function is as follows. Involved in lignin biosynthesis. Regulates the monolignol composition by catalyzing the conversion of cinnamoyl-CoAs into their corresponding cinnamaldehydes. Can use coumaraldehyde and coniferaldehyde as substrates, but barely sinapaldehyde. This Medicago truncatula (Barrel medic) protein is Cinnamoyl-CoA reductase CAD2.